We begin with the raw amino-acid sequence, 245 residues long: Putative binding protein HI_1525 (245 aa).

Positions 1-19 (MKKLVAVTSMILTTFSVQA) are cleaved as a signal peptide. Molybdate contacts are provided by Ser-56 and Val-163.

This sequence belongs to the bacterial solute-binding protein ModA family.

The protein localises to the periplasm. Functionally, probably involved in the binding-dependent system. This Haemophilus influenzae (strain ATCC 51907 / DSM 11121 / KW20 / Rd) protein is Putative binding protein HI_1525.